Consider the following 112-residue polypeptide: T cell receptor alpha variable 9-2 (112 aa).

The signal sequence occupies residues 1–20 (MNYSPGLVSLILLLLGRTRG). The 92-residue stretch at 21-112 (DSVTQMEGPV…DSAVYFCALS (92 aa)) folds into the Ig-like domain. Asn-41 carries an N-linked (GlcNAc...) asparagine glycan. Residues Cys-42 and Cys-109 are joined by a disulfide bond.

In terms of assembly, alpha-beta TR is a heterodimer composed of an alpha and beta chain; disulfide-linked. The alpha-beta TR is associated with the transmembrane signaling CD3 coreceptor proteins to form the TR-CD3 (TcR or TCR). The assembly of alpha-beta TR heterodimers with CD3 occurs in the endoplasmic reticulum where a single alpha-beta TR heterodimer associates with one CD3D-CD3E heterodimer, one CD3G-CD3E heterodimer and one CD247 homodimer forming a stable octameric structure. CD3D-CD3E and CD3G-CD3E heterodimers preferentially associate with TR alpha and TR beta chains, respectively. The association of the CD247 homodimer is the last step of TcR assembly in the endoplasmic reticulum and is required for transport to the cell surface.

The protein resides in the cell membrane. V region of the variable domain of T cell receptor (TR) alpha chain that participates in the antigen recognition. Alpha-beta T cell receptors are antigen specific receptors which are essential to the immune response and are present on the cell surface of T lymphocytes. Recognize peptide-major histocompatibility (MH) (pMH) complexes that are displayed by antigen presenting cells (APC), a prerequisite for efficient T cell adaptive immunity against pathogens. Binding of alpha-beta TR to pMH complex initiates TR-CD3 clustering on the cell surface and intracellular activation of LCK that phosphorylates the ITAM motifs of CD3G, CD3D, CD3E and CD247 enabling the recruitment of ZAP70. In turn ZAP70 phosphorylates LAT, which recruits numerous signaling molecules to form the LAT signalosome. The LAT signalosome propagates signal branching to three major signaling pathways, the calcium, the mitogen-activated protein kinase (MAPK) kinase and the nuclear factor NF-kappa-B (NF-kB) pathways, leading to the mobilization of transcription factors that are critical for gene expression and essential for T cell growth and differentiation. The T cell repertoire is generated in the thymus, by V-(D)-J rearrangement. This repertoire is then shaped by intrathymic selection events to generate a peripheral T cell pool of self-MH restricted, non-autoaggressive T cells. Post-thymic interaction of alpha-beta TR with the pMH complexes shapes TR structural and functional avidity. The sequence is that of T cell receptor alpha variable 9-2 from Homo sapiens (Human).